The chain runs to 468 residues: Glutamate--tRNA ligase (468 aa).

The 'HIGH' region signature appears at 8 to 18; sequence PSPTGFLHVGG. Residues Cys-97, Cys-99, Cys-124, and Asp-126 each contribute to the Zn(2+) site. Residues 236–240 carry the 'KMSKS' region motif; that stretch reads KLSKR. Lys-239 serves as a coordination point for ATP.

Belongs to the class-I aminoacyl-tRNA synthetase family. Glutamate--tRNA ligase type 1 subfamily. In terms of assembly, monomer. The cofactor is Zn(2+).

The protein localises to the cytoplasm. The catalysed reaction is tRNA(Glu) + L-glutamate + ATP = L-glutamyl-tRNA(Glu) + AMP + diphosphate. Its function is as follows. Catalyzes the attachment of glutamate to tRNA(Glu) in a two-step reaction: glutamate is first activated by ATP to form Glu-AMP and then transferred to the acceptor end of tRNA(Glu). This is Glutamate--tRNA ligase from Francisella tularensis subsp. holarctica (strain FTNF002-00 / FTA).